We begin with the raw amino-acid sequence, 259 residues long: GTP cyclohydrolase FolE2 (259 aa).

Belongs to the GTP cyclohydrolase IV family.

The catalysed reaction is GTP + H2O = 7,8-dihydroneopterin 3'-triphosphate + formate + H(+). It participates in cofactor biosynthesis; 7,8-dihydroneopterin triphosphate biosynthesis; 7,8-dihydroneopterin triphosphate from GTP: step 1/1. In terms of biological role, converts GTP to 7,8-dihydroneopterin triphosphate. The polypeptide is GTP cyclohydrolase FolE2 (Thermotoga petrophila (strain ATCC BAA-488 / DSM 13995 / JCM 10881 / RKU-1)).